The primary structure comprises 294 residues: N-acetylmuramic acid 6-phosphate etherase (294 aa).

Positions 54 to 217 constitute an SIS domain; sequence VIKSFEEEGR…STASMIGVGK (164 aa). Catalysis depends on Glu-82, which acts as the Proton donor. Residue Glu-113 is part of the active site.

This sequence belongs to the GCKR-like family. MurNAc-6-P etherase subfamily. As to quaternary structure, homodimer.

It catalyses the reaction N-acetyl-D-muramate 6-phosphate + H2O = N-acetyl-D-glucosamine 6-phosphate + (R)-lactate. The protein operates within amino-sugar metabolism; N-acetylmuramate degradation. Its function is as follows. Specifically catalyzes the cleavage of the D-lactyl ether substituent of MurNAc 6-phosphate, producing GlcNAc 6-phosphate and D-lactate. This chain is N-acetylmuramic acid 6-phosphate etherase, found in Bacillus cereus (strain AH187).